Here is a 673-residue protein sequence, read N- to C-terminus: Inactive polyglycylase TTLL10 (673 aa).

The interval 1–132 (MDHSCTRFIH…ADSDDTNAAG (132 aa)) is disordered. A compositionally biased stretch (basic residues) spans 8–36 (FIHRRGPPTRTRAGFKRGKRPRIQQRPRA). Positions 52–62 (ASQPGPCPAPG) are enriched in pro residues. The segment covering 89 to 105 (PDHDADGHCGPDLEGAE) has biased composition (basic and acidic residues). Positions 155-552 (PGPFFYIGGS…TFRKSLRGQK (398 aa)) constitute a TTL domain. ATP is bound by residues 362–365 (QRYI), Lys-375, and Asp-377. The tract at residues 569 to 673 (EADPRPHLGG…EREEPENARP (105 aa)) is disordered. Pro residues predominate over residues 612 to 627 (PAPPPLVPQRPRPPGP). Over residues 661 to 673 (AKEEREEPENARP) the composition is skewed to basic and acidic residues.

In terms of biological role, inactive polyglycylase. This is Inactive polyglycylase TTLL10 from Homo sapiens (Human).